Here is a 122-residue protein sequence, read N- to C-terminus: MSITKEQILEAVSEMSVMNVVELISAMEKKFGVSANMSVNTNNNSEKSTIEEKTEFDIFLKSIGPNKVSVIKSVRSATGLGLKEAKDLVESAPTVLKENMSKNDAESLKKTLEDAGAEIEIK.

It belongs to the bacterial ribosomal protein bL12 family. As to quaternary structure, homodimer. Part of the ribosomal stalk of the 50S ribosomal subunit. Forms a multimeric L10(L12)X complex, where L10 forms an elongated spine to which 2 to 4 L12 dimers bind in a sequential fashion. Binds GTP-bound translation factors.

Functionally, forms part of the ribosomal stalk which helps the ribosome interact with GTP-bound translation factors. Is thus essential for accurate translation. This chain is Large ribosomal subunit protein bL12, found in Buchnera aphidicola subsp. Schizaphis graminum (strain Sg).